Here is a 177-residue protein sequence, read N- to C-terminus: Large ribosomal subunit protein uL5 (177 aa).

The protein belongs to the universal ribosomal protein uL5 family. In terms of assembly, part of the 50S ribosomal subunit; part of the 5S rRNA/L5/L18/L25 subcomplex. Contacts the 5S rRNA and the P site tRNA. Forms a bridge to the 30S subunit in the 70S ribosome.

This is one of the proteins that bind and probably mediate the attachment of the 5S RNA into the large ribosomal subunit, where it forms part of the central protuberance. In the 70S ribosome it contacts protein S13 of the 30S subunit (bridge B1b), connecting the 2 subunits; this bridge is implicated in subunit movement. Contacts the P site tRNA; the 5S rRNA and some of its associated proteins might help stabilize positioning of ribosome-bound tRNAs. In Wolbachia sp. subsp. Brugia malayi (strain TRS), this protein is Large ribosomal subunit protein uL5.